The sequence spans 460 residues: MATGKIIQVIGAVVDVEFPQDAVPKVYDALEVENGAEKLVLEVQQQLGGGIVRCIAMGSSDGLRRGLNVNNLDHPIEVPVGKATLGRIMNVLGEPIDMKGDIGEEERWAIHRAAPSYEELSNSQELLETGIKVIDLMCPFAKGGKVGLFGGAGVGKTVNMMELIRNIAIEHSGYSVFAGVGERTREGNDFYHEMTDSNVIDKVSLVYGQMNEPPGNRLRVALTGLTMAEKFRDEGRDVLLFVDNIYRYTLAGTEVSALLGRMPSAVGYQPTLAEEMGVLQERITSTKTGSITSVQAVYVPADDLTDPSPATTFAHLDATVVLSRQIASLGIYPAVDPLDSTSRQLDPLVVGQEHYDVARGVQSILQRYQELKDIIAILGMDELSEEDKLVVSRARKIQRFLSQPFFVAEVFTGSPGKYVALKDTIRGFKGIMEGEYDHLPEQAFYMVGSIDEVVEKAKKL.

Residue 150-157 (GGAGVGKT) participates in ATP binding.

It belongs to the ATPase alpha/beta chains family. As to quaternary structure, F-type ATPases have 2 components, CF(1) - the catalytic core - and CF(0) - the membrane proton channel. CF(1) has five subunits: alpha(3), beta(3), gamma(1), delta(1), epsilon(1). CF(0) has three main subunits: a(1), b(2) and c(9-12). The alpha and beta chains form an alternating ring which encloses part of the gamma chain. CF(1) is attached to CF(0) by a central stalk formed by the gamma and epsilon chains, while a peripheral stalk is formed by the delta and b chains.

The protein resides in the cell inner membrane. It catalyses the reaction ATP + H2O + 4 H(+)(in) = ADP + phosphate + 5 H(+)(out). Its function is as follows. Produces ATP from ADP in the presence of a proton gradient across the membrane. The catalytic sites are hosted primarily by the beta subunits. In Pectobacterium carotovorum subsp. carotovorum (strain PC1), this protein is ATP synthase subunit beta.